The chain runs to 151 residues: Nucleoside diphosphate kinase (151 aa).

K9, F57, R86, T92, R103, and N113 together coordinate ATP. The active-site Pros-phosphohistidine intermediate is the H116.

It belongs to the NDK family. Homotetramer. It depends on Mg(2+) as a cofactor.

The protein resides in the cytoplasm. It catalyses the reaction a 2'-deoxyribonucleoside 5'-diphosphate + ATP = a 2'-deoxyribonucleoside 5'-triphosphate + ADP. The enzyme catalyses a ribonucleoside 5'-diphosphate + ATP = a ribonucleoside 5'-triphosphate + ADP. Functionally, major role in the synthesis of nucleoside triphosphates other than ATP. The ATP gamma phosphate is transferred to the NDP beta phosphate via a ping-pong mechanism, using a phosphorylated active-site intermediate. This chain is Nucleoside diphosphate kinase, found in Chloroflexus aurantiacus (strain ATCC 29364 / DSM 637 / Y-400-fl).